Consider the following 529-residue polypeptide: Zinc finger CCCH domain-containing protein 65 (529 aa).

The segment covering 1–10 has biased composition (basic and acidic residues); it reads MADADARAPP. 2 disordered regions span residues 1–36 and 134–179; these read MADA…EDEV and PARK…GSYV. A compositionally biased stretch (low complexity) spans 14–31; it reads PGATPIGSISPSSAAPAA. C3H1-type zinc fingers lie at residues 108 to 136, 237 to 265, and 285 to 313; these read RPGE…HPAR, GSSQ…HRDG, and RPGE…HPDP. Positions 313-347 are disordered; it reads PSNVASKDPQLEHENGDAPQQDVQGSSSQPNASIW. Residues 333–344 are compositionally biased toward polar residues; it reads QDVQGSSSQPNA. 2 C3H1-type zinc fingers span residues 433-461 and 477-505; these read RPGQ…HPRS and KPDQ…HPFN.

The polypeptide is Zinc finger CCCH domain-containing protein 65 (Oryza sativa subsp. japonica (Rice)).